The primary structure comprises 180 residues: N-terminal acetyltransferase B complex catalytic subunit naa20 (180 aa).

The N-acetyltransferase domain occupies 2–156 (TDTRKFKATD…DSFDMRKPLS (155 aa)).

This sequence belongs to the acetyltransferase family. Component of the N-terminal acetyltransferase B (NatB) complex.

It localises to the cytoplasm. Its subcellular location is the nucleus. It carries out the reaction N-terminal L-methionyl-L-asparaginyl-[protein] + acetyl-CoA = N-terminal N(alpha)-acetyl-L-methionyl-L-asparaginyl-[protein] + CoA + H(+). It catalyses the reaction N-terminal L-methionyl-L-glutaminyl-[protein] + acetyl-CoA = N-terminal N(alpha)-acetyl-L-methionyl-L-glutaminyl-[protein] + CoA + H(+). The catalysed reaction is N-terminal L-methionyl-L-aspartyl-[protein] + acetyl-CoA = N-terminal N(alpha)-acetyl-L-methionyl-L-aspartyl-[protein] + CoA + H(+). The enzyme catalyses N-terminal L-methionyl-L-glutamyl-[protein] + acetyl-CoA = N-terminal N(alpha)-acetyl-L-methionyl-L-glutamyl-[protein] + CoA + H(+). In terms of biological role, catalytic subunit of the NatB N-terminal acetyltransferase, which catalyzes acetylation of the amino-terminal methionine residues of all proteins beginning with Met-Asp or Met-Glu and of some proteins beginning with Met-Asn, Met-Gln or Met-Met. This Schizosaccharomyces pombe (strain 972 / ATCC 24843) (Fission yeast) protein is N-terminal acetyltransferase B complex catalytic subunit naa20 (naa20).